A 785-amino-acid polypeptide reads, in one-letter code: E3 UFM1-protein ligase 1 homolog (785 aa).

Residues A405 to V483 form a disordered region.

The protein belongs to the UFL1 family.

In terms of biological role, E3 UFM1-protein ligase that mediates ufmylation of target proteins. This is E3 UFM1-protein ligase 1 homolog from Drosophila pseudoobscura pseudoobscura (Fruit fly).